A 390-amino-acid polypeptide reads, in one-letter code: Aspartate beta-hydroxylase domain-containing protein 1 (390 aa).

The tract at residues 1–54 (MKEGRGSFSVERGPRKERETAQSGMWKGNSPAGSQGAAMEGTGGELGGQGNWGP) is disordered. The Cytoplasmic segment spans residues 1–72 (MKEGRGSFSV…RASLIMLPWP (72 aa)). A compositionally biased stretch (gly residues) spans 41-51 (GTGGELGGQGN). Residues 73 to 95 (LPLASSALTLLFGALTSLFLWYC) traverse the membrane as a helical segment. The Lumenal portion of the chain corresponds to 96 to 390 (YRLGSQDMQA…ALDFVFAPDP (295 aa)). The disordered stretch occupies residues 116–143 (RGGPVGCSEAGGPSPGGPGDPGEGPRTE). The span at 128-137 (PSPGGPGDPG) shows a compositional bias: gly residues. At Ser129 the chain carries Phosphoserine.

This sequence belongs to the aspartyl/asparaginyl beta-hydroxylase family.

It localises to the membrane. The protein is Aspartate beta-hydroxylase domain-containing protein 1 (ASPHD1) of Homo sapiens (Human).